We begin with the raw amino-acid sequence, 159 residues long: 2-C-methyl-D-erythritol 2,4-cyclodiphosphate synthase (159 aa).

The a divalent metal cation site is built by aspartate 10 and histidine 12. 4-CDP-2-C-methyl-D-erythritol 2-phosphate-binding positions include 10-12 (DVH) and 36-37 (HS). Histidine 44 is a binding site for a divalent metal cation. Residues 58–60 (DIG), 63–67 (FPDTD), 102–108 (AQAPRMA), 134–137 (TTSE), phenylalanine 141, and arginine 144 contribute to the 4-CDP-2-C-methyl-D-erythritol 2-phosphate site.

Belongs to the IspF family. In terms of assembly, homotrimer. The cofactor is a divalent metal cation.

The catalysed reaction is 4-CDP-2-C-methyl-D-erythritol 2-phosphate = 2-C-methyl-D-erythritol 2,4-cyclic diphosphate + CMP. Its pathway is isoprenoid biosynthesis; isopentenyl diphosphate biosynthesis via DXP pathway; isopentenyl diphosphate from 1-deoxy-D-xylulose 5-phosphate: step 4/6. In terms of biological role, involved in the biosynthesis of isopentenyl diphosphate (IPP) and dimethylallyl diphosphate (DMAPP), two major building blocks of isoprenoid compounds. Catalyzes the conversion of 4-diphosphocytidyl-2-C-methyl-D-erythritol 2-phosphate (CDP-ME2P) to 2-C-methyl-D-erythritol 2,4-cyclodiphosphate (ME-CPP) with a corresponding release of cytidine 5-monophosphate (CMP). The protein is 2-C-methyl-D-erythritol 2,4-cyclodiphosphate synthase of Cellvibrio japonicus (strain Ueda107) (Pseudomonas fluorescens subsp. cellulosa).